A 124-amino-acid polypeptide reads, in one-letter code: Small ribosomal subunit protein eS6 (124 aa).

Belongs to the eukaryotic ribosomal protein eS6 family.

The chain is Small ribosomal subunit protein eS6 from Methanococcus maripaludis (strain C5 / ATCC BAA-1333).